We begin with the raw amino-acid sequence, 325 residues long: MISEEEKIKFLKELVEIYSPTGREEEAAKFIKEKFEEYGIEAYVDNVGNVIARKSGEGPLVLLAGHIDTVPGYIPVRIEGEVLWGRGSVDAKGPLATLFFSTIEGNANVIFAGLVDEEGFSKGARNLKIPRPDYIIVGEPSGTNGVTIGYKGSLTVRFVERVEKVHSSLGVGAAERLIEKWLEISKDFSDGFNGLNGRIVRFLAYDREFEFYGEMIINLRTPPGYVPPLEWDIIDFVPAYEVDRRSPLVRAFVKSIREAGLKPKLKKKSGTADTNILGPKFGVDAVAYGPGDSKLDHTPYERINLREYLKSIEILKAVLRKLKGG.

His-66 provides a ligand contact to Zn(2+). Asp-68 is a catalytic residue. Position 90 (Asp-90) interacts with Zn(2+). The active-site Proton acceptor is the Glu-117. Positions 118, 139, and 297 each coordinate Zn(2+).

It belongs to the peptidase M20A family. LysK subfamily. Zn(2+) serves as cofactor. Requires Co(2+) as cofactor.

Its subcellular location is the cytoplasm. It carries out the reaction [amino-group carrier protein]-C-terminal-gamma-(L-lysyl)-L-glutamate + H2O = [amino-group carrier protein]-C-terminal-L-glutamate + L-lysine. The catalysed reaction is [amino-group carrier protein]-C-terminal-gamma-(L-ornithyl)-L-glutamate + H2O = [amino-group carrier protein]-C-terminal-L-glutamate + L-ornithine. It functions in the pathway amino-acid biosynthesis; L-lysine biosynthesis via AAA pathway; L-lysine from L-alpha-aminoadipate (Thermus route): step 5/5. It participates in amino-acid biosynthesis; L-arginine biosynthesis. In terms of biological role, catalyzes the release of L-lysine from [LysW]-gamma-L-lysine and the release of L-ornithine from [LysW]-L-ornithine. The protein is Putative [LysW]-lysine/[LysW]-ornithine hydrolase of Pyrococcus horikoshii (strain ATCC 700860 / DSM 12428 / JCM 9974 / NBRC 100139 / OT-3).